A 423-amino-acid chain; its full sequence is COP9 signalosome complex subunit 3 (423 aa).

The region spanning 197-365 (NFERALYFYE…GMVCFHDNPE (169 aa)) is the PCI domain. The interval 402 to 423 (QFVQKSMGSQEDDSGTKPSSYS) is disordered.

This sequence belongs to the CSN3 family. Component of the CSN complex, probably composed of COPS1, COPS2, COPS3, COPS4, COPS5, COPS6, COPS7, COPS8 and COPS9.

It localises to the cytoplasm. The protein localises to the nucleus. Component of the COP9 signalosome complex (CSN), a complex involved in various cellular and developmental processes. The CSN complex is an essential regulator of the ubiquitin (Ubl) conjugation pathway by mediating the deneddylation of the cullin subunits of E3 ligase complexes, leading to modify the Ubl ligase activity. This chain is COP9 signalosome complex subunit 3 (COPS3), found in Gallus gallus (Chicken).